The primary structure comprises 238 residues: Ribonuclease PH (238 aa).

Phosphate contacts are provided by residues Arg86 and 124 to 126 (GTR).

This sequence belongs to the RNase PH family. Homohexameric ring arranged as a trimer of dimers.

The catalysed reaction is tRNA(n+1) + phosphate = tRNA(n) + a ribonucleoside 5'-diphosphate. Its function is as follows. Phosphorolytic 3'-5' exoribonuclease that plays an important role in tRNA 3'-end maturation. Removes nucleotide residues following the 3'-CCA terminus of tRNAs; can also add nucleotides to the ends of RNA molecules by using nucleoside diphosphates as substrates, but this may not be physiologically important. Probably plays a role in initiation of 16S rRNA degradation (leading to ribosome degradation) during starvation. The polypeptide is Ribonuclease PH (Actinobacillus pleuropneumoniae serotype 5b (strain L20)).